Consider the following 201-residue polypeptide: Large ribosomal subunit protein uL18 (201 aa).

The protein belongs to the universal ribosomal protein uL18 family. In terms of assembly, part of the 50S ribosomal subunit. Contacts the 5S and 23S rRNAs.

Functionally, this is one of the proteins that bind and probably mediate the attachment of the 5S RNA into the large ribosomal subunit, where it forms part of the central protuberance. The protein is Large ribosomal subunit protein uL18 of Thermococcus kodakarensis (strain ATCC BAA-918 / JCM 12380 / KOD1) (Pyrococcus kodakaraensis (strain KOD1)).